Here is a 1068-residue protein sequence, read N- to C-terminus: Tricorn protease homolog (1068 aa).

The interval 61–326 (MKAYYMYPDI…DSLTKLDINL (266 aa)) is six-bladed beta propeller. A seven-bladed beta propeller region spans residues 338-686 (VNVMEYMNEA…RKGGVIDLSR (349 aa)). Residues 692–762 (EPEKEWRQML…RTSHSYETAY (71 aa)) form a C-1 region. The active-site Charge relay system is the His-756. The segment at 771–864 (SVGGLGAEFE…RVTVKVLKDE (94 aa)) is PDZ-like. The segment at 865–1068 (RFLIYRYWVE…TAIELALKQL (204 aa)) is C-2. Residue Gly-927 participates in substrate binding. Ser-974 serves as the catalytic Nucleophile. Glu-1032 serves as the catalytic Charge relay system.

It belongs to the peptidase S41B family.

The protein resides in the cytoplasm. In terms of biological role, degrades oligopeptides in a sequential manner. In Saccharolobus solfataricus (strain ATCC 35092 / DSM 1617 / JCM 11322 / P2) (Sulfolobus solfataricus), this protein is Tricorn protease homolog (tri).